A 202-amino-acid chain; its full sequence is Small ribosomal subunit protein uS4 (202 aa).

The segment at 22 to 43 (TRKNARRAYPPGQHGQNRRKRS) is disordered. One can recognise an S4 RNA-binding domain in the interval 90–152 (MRLDNTVFRL…DKSRKLVQAN (63 aa)).

This sequence belongs to the universal ribosomal protein uS4 family. Part of the 30S ribosomal subunit. Contacts protein S5. The interaction surface between S4 and S5 is involved in control of translational fidelity.

In terms of biological role, one of the primary rRNA binding proteins, it binds directly to 16S rRNA where it nucleates assembly of the body of the 30S subunit. With S5 and S12 plays an important role in translational accuracy. The polypeptide is Small ribosomal subunit protein uS4 (Gloeothece citriformis (strain PCC 7424) (Cyanothece sp. (strain PCC 7424))).